The following is a 302-amino-acid chain: Sulfate adenylyltransferase subunit 2 (302 aa).

This sequence belongs to the PAPS reductase family. CysD subfamily. In terms of assembly, heterodimer composed of CysD, the smaller subunit, and CysN.

The catalysed reaction is sulfate + ATP + H(+) = adenosine 5'-phosphosulfate + diphosphate. The protein operates within sulfur metabolism; hydrogen sulfide biosynthesis; sulfite from sulfate: step 1/3. With CysN forms the ATP sulfurylase (ATPS) that catalyzes the adenylation of sulfate producing adenosine 5'-phosphosulfate (APS) and diphosphate, the first enzymatic step in sulfur assimilation pathway. APS synthesis involves the formation of a high-energy phosphoric-sulfuric acid anhydride bond driven by GTP hydrolysis by CysN coupled to ATP hydrolysis by CysD. This chain is Sulfate adenylyltransferase subunit 2, found in Shewanella halifaxensis (strain HAW-EB4).